Reading from the N-terminus, the 534-residue chain is Cytochrome P450 monooxygenase ascG (534 aa).

Residues 13–33 (FVASFPALSAAAGLIVAISFI) traverse the membrane as a helical segment. Residue Asn466 is glycosylated (N-linked (GlcNAc...) asparagine). Cys469 contributes to the heme binding site.

It belongs to the cytochrome P450 family. The cofactor is heme.

The protein localises to the membrane. It carries out the reaction ilicicolin C + NADPH + O2 + H(+) = ascochlorin + NADP(+) + 2 H2O. Its pathway is secondary metabolite biosynthesis; terpenoid biosynthesis. In terms of biological role, cytochrome P450 monooxygenase; part of the asc-1 gene cluster that mediates the biosynthesis of both ascochlorin and ascofuranone, a strong inhibitor of cyanide-insensitive alternative oxidases and a promising drug candidate against African trypanosomiasis. The first step in the pathway is performed by the non-reducing polyketide synthase ascC that produces orsellinic acid by condensing acetyl-CoA with 3 malonyl-CoA units. Orsellinic acid is then prenylated by the prenyltransferase ascA to yield ilicicolinic acid B. Ilicicolinic acid B is further reduced to ilicicolin B by the reductase ascB. The halogenase ascD then chlorinates ilicicolin B to produce ilicicolin A which is converted to ilicicolin A epoxide by the cytochrome P450 monooxygenase ascE that catalyzes stereoselective epoxidation of the terminal double bond of the prenyl group. Ilicicolin A epoxide is the last common precursor for the biosynthesis of ascofuranone and ascochlorin. The terpene cyclase ascF produces a monocyclic terpene, and the cyclization reaction is proposed to be initiated by protonation of the terminal epoxide of ilicicolin A epoxide to generate a monocyclic tertiarycation, which is followed by a series of hydride and methyl shifts with abstraction of proton, leading to the formation of the (14S,15R,19R)-trimethylcyclohexanone ring structure of ilicicolin C, which is finally reduced to ascochlorin by the dehydrogenase ascG. On the other hand, ilicicolin A epoxide is hydroxylated by the cytochrome P450 monooxygenase ascH, and the resultant product is cyclized by the terpene cyclase ascI to ascofuranol via protonation-initiated epoxide ring opening, which facilitates the 6-endo-tet cyclization to form the tetrahy-drofuran ring. Finally, ascofuranol is oxidized into ascofuranone by ascJ. The sequence is that of Cytochrome P450 monooxygenase ascG from Acremonium egyptiacum (Oospora egyptiaca).